The following is a 280-amino-acid chain: Homeobox protein SMOX-1 (280 aa).

The tract at residues 61 to 88 (PNNNSFQLNTTNDSNNNNTTNNGNDSRS) is disordered. Residues 69 to 85 (NTTNDSNNNNTTNNGND) are compositionally biased toward low complexity. The Antp-type hexapeptide motif lies at 214–219 (VYPWMN). The segment at residues 229 to 280 (QKRTRQTYTRYQTLELEKEFHFNKYLTRRRRIEIAHTLTLTERQIKIWFQNR) is a DNA-binding region (homeobox).

It belongs to the Antp homeobox family.

It localises to the nucleus. The chain is Homeobox protein SMOX-1 (SMOX-1) from Schistosoma mansoni (Blood fluke).